Here is a 933-residue protein sequence, read N- to C-terminus: Melanoma-associated antigen E1 (933 aa).

4 disordered regions span residues 1-113 (MSLV…VSAG), 149-236 (GASI…GINL), 256-282 (SDISVPPPSAEGLSTSMPPPSGEVQST), and 360-393 (TSGLHDLEEESSISQMPLAAEGPSASGSSIEDEN). Basic residues predominate over residues 8 to 23 (SRRRRGGRANGRKNSG). Composition is skewed to polar residues over residues 64 to 97 (GGSSTSVPPTASEGSSAPGQLITSEGRNTSQLPT), 149 to 166 (GASISEQPQSHEGPNVQP), 173 to 184 (GTSVPPTFSEES), and 219 to 236 (APSTSVPPTASNGLGINL). 2 MAGE domains span residues 467 to 666 (MEQN…YNEA) and 721 to 912 (LESK…YREA). Positions 719–933 (SRLESKSRKL…RRPLVVRNLR (215 aa)) are interaction with DTNA.

Interacts with DTNA. Interacts with TRIM28.

It localises to the cytoplasm. It is found in the perinuclear region. Its subcellular location is the nucleus. The protein resides in the cell membrane. In terms of biological role, may enhance ubiquitin ligase activity of RING-type zinc finger-containing E3 ubiquitin-protein ligases. Proposed to act through recruitment and/or stabilization of the Ubl-conjugating enzyme (E2) at the E3:substrate complex. The chain is Melanoma-associated antigen E1 (Magee1) from Rattus norvegicus (Rat).